The sequence spans 172 residues: ATP synthase subunit b, chloroplastic (172 aa).

A helical membrane pass occupies residues 15-37 (ILATNLINLSAVLGVLIFFGKGV).

This sequence belongs to the ATPase B chain family. F-type ATPases have 2 components, F(1) - the catalytic core - and F(0) - the membrane proton channel. F(1) has five subunits: alpha(3), beta(3), gamma(1), delta(1), epsilon(1). F(0) has four main subunits: a(1), b(1), b'(1) and c(10-14). The alpha and beta chains form an alternating ring which encloses part of the gamma chain. F(1) is attached to F(0) by a central stalk formed by the gamma and epsilon chains, while a peripheral stalk is formed by the delta, b and b' chains.

It localises to the plastid. The protein resides in the chloroplast thylakoid membrane. Functionally, f(1)F(0) ATP synthase produces ATP from ADP in the presence of a proton or sodium gradient. F-type ATPases consist of two structural domains, F(1) containing the extramembraneous catalytic core and F(0) containing the membrane proton channel, linked together by a central stalk and a peripheral stalk. During catalysis, ATP synthesis in the catalytic domain of F(1) is coupled via a rotary mechanism of the central stalk subunits to proton translocation. Component of the F(0) channel, it forms part of the peripheral stalk, linking F(1) to F(0). The protein is ATP synthase subunit b, chloroplastic of Pisum sativum (Garden pea).